Consider the following 478-residue polypeptide: Sulfate adenylyltransferase subunit 1 (478 aa).

One can recognise a tr-type G domain in the interval 24–240; the sequence is KSLLRFLTCG…VLENVDIDAD (217 aa). The interval 33–40 is G1; it reads GSVDDGKS. Position 33-40 (33-40) interacts with GTP; the sequence is GSVDDGKS. A G2 region spans residues 91-95; sequence GITID. Positions 112–115 are G3; the sequence is DTPG. Residues 112–116 and 167–170 contribute to the GTP site; these read DTPGH and NKMD. Positions 167 to 170 are G4; sequence NKMD. A G5 region spans residues 206-208; sequence SAL.

This sequence belongs to the TRAFAC class translation factor GTPase superfamily. Classic translation factor GTPase family. CysN/NodQ subfamily. In terms of assembly, heterodimer composed of CysD, the smaller subunit, and CysN.

The catalysed reaction is sulfate + ATP + H(+) = adenosine 5'-phosphosulfate + diphosphate. It participates in sulfur metabolism; hydrogen sulfide biosynthesis; sulfite from sulfate: step 1/3. With CysD forms the ATP sulfurylase (ATPS) that catalyzes the adenylation of sulfate producing adenosine 5'-phosphosulfate (APS) and diphosphate, the first enzymatic step in sulfur assimilation pathway. APS synthesis involves the formation of a high-energy phosphoric-sulfuric acid anhydride bond driven by GTP hydrolysis by CysN coupled to ATP hydrolysis by CysD. The chain is Sulfate adenylyltransferase subunit 1 from Aliivibrio fischeri (strain MJ11) (Vibrio fischeri).